Here is an 885-residue protein sequence, read N- to C-terminus: MAPGEQQLSLVPDDTIQGSLFAPEPSEDKTEESERPKQRRSHPGRRTAPAAQHNEDSSNNDDEGLPRWHHHGLVDPLALTPMLRHYVELKAAHPERVLLYRLGDFFECFFEDALLTSRLLELTLTGKEGGKSIGRVPMAGIPHHAAERYCSELVRRGHAVALCDQLETTAAKGALLKRDITRVLTPGTVLEEGMLAARRNNWLAAVVLDDEQRWGLAVADVSTGELLLHERQGTTELQQQLLQLEAAELLLPGIEAAEWCPDGLGLTQQPRTPFEAASADRALKQRFGVRNLEGLGLADHPLARRAAGGLIAYLDASQPGSTVPLERPQLVFAGDALVLDHQTRRNLELTATQRDGQFQGSLLWAIDRSHTAMGGRALRRWLEAPLLDATAIRGRQEAITELVEQRPLRLSVRRLLRPMADLERLAGRCGAGRASARDLVALADGLERLPLLADLLKSSSAAPLADLQQPRPDLQQLAELLRFQLVDQPPMSLSEGGLIHDGVDEDLDDLRNRLDEQENWLAGVEKRERKASSNPNLRLQFHRSFGYFLAVSRAKATAVPDHWIRRQTLSNEERFVTPELKEREGRILQLKARSHQREYDLFCRLRDQVGEQATAIRDAARAVASLDALAGLAELAATQGYCRPELTDGRCLEIEGGRHPVVEQLLSESAFVPNSVALGHGDKPDLVVLTGPNASGKSCYLRQCGVLQLMAQMGSWIPAERAAIALADRIFTRVGAVDDLASGQSTFMVEMAETANILQHASERSLVLLDEIGRGTATFDGLSIAWAVAEHLASAPPHGLGARSIFATHYHELNALAGSHSNVANFQVVVEEQDAELVFLHKVMPGGADRSYGIEAARLAGVPPSVVQRARQMLERIEGGQPLAC.

Positions Met1–Arg67 are disordered. Positions Ser26–Pro36 are enriched in basic and acidic residues. An ATP-binding site is contributed by Gly691 to Ser698.

The protein belongs to the DNA mismatch repair MutS family.

This protein is involved in the repair of mismatches in DNA. It is possible that it carries out the mismatch recognition step. This protein has a weak ATPase activity. This is DNA mismatch repair protein MutS from Synechococcus sp. (strain RCC307).